Reading from the N-terminus, the 344-residue chain is Anthranilate phosphoribosyltransferase (344 aa).

Residues G83, G86 to D87, T91, N93 to T96, K111 to S119, and S123 each bind 5-phospho-alpha-D-ribose 1-diphosphate. G83 is a binding site for anthranilate. Residue S95 coordinates Mg(2+). Residue R169 participates in anthranilate binding. The Mg(2+) site is built by D228 and E229.

It belongs to the anthranilate phosphoribosyltransferase family. Homodimer. Mg(2+) is required as a cofactor.

The catalysed reaction is N-(5-phospho-beta-D-ribosyl)anthranilate + diphosphate = 5-phospho-alpha-D-ribose 1-diphosphate + anthranilate. It participates in amino-acid biosynthesis; L-tryptophan biosynthesis; L-tryptophan from chorismate: step 2/5. Catalyzes the transfer of the phosphoribosyl group of 5-phosphorylribose-1-pyrophosphate (PRPP) to anthranilate to yield N-(5'-phosphoribosyl)-anthranilate (PRA). The polypeptide is Anthranilate phosphoribosyltransferase (Methylibium petroleiphilum (strain ATCC BAA-1232 / LMG 22953 / PM1)).